The following is a 103-amino-acid chain: UPF0298 protein LACR_0404 (103 aa).

Belongs to the UPF0298 family.

It localises to the cytoplasm. This Lactococcus lactis subsp. cremoris (strain SK11) protein is UPF0298 protein LACR_0404.